The primary structure comprises 143 residues: Putative pre-16S rRNA nuclease (143 aa).

It belongs to the YqgF nuclease family.

It is found in the cytoplasm. In terms of biological role, could be a nuclease involved in processing of the 5'-end of pre-16S rRNA. The sequence is that of Putative pre-16S rRNA nuclease from Ralstonia pickettii (strain 12J).